An 832-amino-acid chain; its full sequence is Armadillo segment polarity protein (832 aa).

The segment covering 1-20 (MSYQMPQNRTMSHNPYNSSD) has biased composition (polar residues). The disordered stretch occupies residues 1–24 (MSYQMPQNRTMSHNPYNSSDMPMP). ARM repeat units follow at residues 146 to 185 (NYQD…QLSK), 188 to 228 (ASRH…NLSH), 230 to 269 (RQGL…NLLL), 272 to 311 (DGSK…ILAY), 356 to 395 (SSNK…NLSD), 397 to 434 (ATKV…NLTC), 483 to 524 (SESA…NLAL), 594 to 634 (ELNR…ELAV), and 636 to 675 (KEVA…KMSE). The segment at 721-832 (AYEGLYGQGP…QVAAWYDTDL (112 aa)) is disordered. Residues 767 to 777 (PAGSNPNAGNN) show a composition bias toward low complexity.

It belongs to the beta-catenin family.

Its subcellular location is the cytoplasm. It is found in the cell membrane. The protein resides in the cell junction. It localises to the adherens junction. In terms of biological role, may associate with CadN and participate in the transmission of developmental information. Can associate with alpha-catenin. Accumulates through wg signaling; arm function in wg signal transduction is required early in development for determination of neuroblast fate. Arm and Abl proteins function cooperatively at adherens junctions in both the CNS and epidermis. The polypeptide is Armadillo segment polarity protein (Aedes aegypti (Yellowfever mosquito)).